The primary structure comprises 330 residues: Endochitinase Ziz m 1.0101 (330 aa).

A signal peptide spans 1 to 24 (MVPQAKLVVASLILTSALIQTSEA). Residues 26–330 (GGIATYWGQY…LRTKFMYQNA (305 aa)) form the GH18 domain. 3 cysteine pairs are disulfide-bonded: cysteine 47/cysteine 90, cysteine 77/cysteine 80, and cysteine 187/cysteine 219. The interval 72–86 (NISGHCSDCTFLGEE) is binds to IgE in 70% of the 10 patients tested allergic to Indian jujube and latex. The binds to IgE in 100% of the 10 patients tested allergic to Indian jujube and latex; sufficient for prediction of the presence of allergic reactions in these patients stretch occupies residues 292 to 301 (VWNRYYDLKT). Binds to IgE in 70% of the 10 patients tested allergic to Indian jujube and latex regions lie at residues 300–311 (KTNYSSSIILEY) and 309–320 (LEYVNSGTKYLP).

Belongs to the glycosyl hydrolase 18 family. Chitinase class II subfamily.

The protein resides in the secreted. The enzyme catalyses Random endo-hydrolysis of N-acetyl-beta-D-glucosaminide (1-&gt;4)-beta-linkages in chitin and chitodextrins.. Functionally, defense against chitin containing fungal pathogens. This chain is Endochitinase Ziz m 1.0101, found in Ziziphus mauritiana (Indian jujube).